A 296-amino-acid chain; its full sequence is Nucleotide-binding protein RSc0403 (296 aa).

8–15 (GMSGSGKS) contributes to the ATP binding site. 57–60 (DIRS) serves as a coordination point for GTP. A disordered region spans residues 99–124 (TRRRHPLSIRNGRPDAGNPPSAAKGP).

This sequence belongs to the RapZ-like family.

Displays ATPase and GTPase activities. The polypeptide is Nucleotide-binding protein RSc0403 (Ralstonia nicotianae (strain ATCC BAA-1114 / GMI1000) (Ralstonia solanacearum)).